The sequence spans 459 residues: tRNA modification GTPase MnmE (459 aa).

Positions 29, 91, and 130 each coordinate (6S)-5-formyl-5,6,7,8-tetrahydrofolate. The 157-residue stretch at 225 to 381 (GVKVAIVGRP…LEEALEQLVT (157 aa)) folds into the TrmE-type G domain. Residue Asn235 coordinates K(+). Residues 235 to 240 (NVGKSS), 254 to 260 (TDLPGTT), and 279 to 282 (DTAG) each bind GTP. A Mg(2+)-binding site is contributed by Ser239. The K(+) site is built by Thr254, Leu256, and Thr259. Thr260 is a Mg(2+) binding site. Residue Lys459 participates in (6S)-5-formyl-5,6,7,8-tetrahydrofolate binding.

This sequence belongs to the TRAFAC class TrmE-Era-EngA-EngB-Septin-like GTPase superfamily. TrmE GTPase family. In terms of assembly, homodimer. Heterotetramer of two MnmE and two MnmG subunits. K(+) serves as cofactor.

It localises to the cytoplasm. Exhibits a very high intrinsic GTPase hydrolysis rate. Involved in the addition of a carboxymethylaminomethyl (cmnm) group at the wobble position (U34) of certain tRNAs, forming tRNA-cmnm(5)s(2)U34. The sequence is that of tRNA modification GTPase MnmE from Synechococcus sp. (strain JA-3-3Ab) (Cyanobacteria bacterium Yellowstone A-Prime).